Reading from the N-terminus, the 194-residue chain is UPF0232 protein in recF-gyrB intergenic region (194 aa).

Over residues 1-14 the composition is skewed to acidic residues; sequence MTGPFDDDGPEEDA. The tract at residues 1–81 is disordered; that stretch reads MTGPFDDDGP…GPGPDARDPQ (81 aa). The span at 30–52 shows a compositional bias: basic and acidic residues; it reads DLVRRTLEEARGAARSQGKDVGR.

It belongs to the UPF0232 family.

This Mycolicibacterium smegmatis (Mycobacterium smegmatis) protein is UPF0232 protein in recF-gyrB intergenic region.